The primary structure comprises 208 residues: High frequency lysogenization protein HflD homolog (208 aa).

This sequence belongs to the HflD family.

The protein resides in the cytoplasm. The protein localises to the cell inner membrane. The chain is High frequency lysogenization protein HflD homolog from Photorhabdus laumondii subsp. laumondii (strain DSM 15139 / CIP 105565 / TT01) (Photorhabdus luminescens subsp. laumondii).